Consider the following 427-residue polypeptide: Outer capsid protein P8 (427 aa).

It belongs to the phytoreovirus outer capsid protein P8 family. As to quaternary structure, homotrimer. Homomultimer.

The protein localises to the virion. The protein resides in the host cytoplasm. Its function is as follows. Capsid protein which self-assembles to form the outer icosahedral capsid with a T=13 symmetry, about 70 nm in diameter and consisting of 780 molecules capsid proteins. This is Outer capsid protein P8 from Catharanthus roseus (Madagascar periwinkle).